The chain runs to 708 residues: DNA-directed RNA polymerase III subunit RPC5 (708 aa).

The span at 146-155 (DAKHREREAA) shows a compositional bias: basic and acidic residues. The interval 146-170 (DAKHREREAANEAGDSSQDEAEDDV) is disordered. 2 positions are modified to phosphoserine: serine 161 and serine 162. A Glycyl lysine isopeptide (Lys-Gly) (interchain with G-Cter in SUMO2) cross-link involves residue lysine 171. At serine 192 the chain carries Phosphoserine. Phosphotyrosine is present on tyrosine 224. Lysine 432 participates in a covalent cross-link: Glycyl lysine isopeptide (Lys-Gly) (interchain with G-Cter in SUMO2). Residues 485–552 (QLRVPAVPPG…DSFNGHPPQG (68 aa)) are disordered. Lysine 498 participates in a covalent cross-link: Glycyl lysine isopeptide (Lys-Gly) (interchain with G-Cter in SUMO1); alternate. Residue lysine 498 forms a Glycyl lysine isopeptide (Lys-Gly) (interchain with G-Cter in SUMO2); alternate linkage. Over residues 502–519 (VSEEGEEDEEQEAEEEPM) the composition is skewed to acidic residues. 2 positions are modified to phosphoserine: serine 503 and serine 522. The tract at residues 556–708 (TPVARELKAF…MWYLKGTVQS (153 aa)) is required for Pol III complex stability. A Glycyl lysine isopeptide (Lys-Gly) (interchain with G-Cter in SUMO2) cross-link involves residue lysine 659.

Component of the RNA polymerase III complex consisting of at least 17 subunits: a ten-subunit horseshoe-shaped catalytic core composed of POLR3A/RPC1, POLR3B/RPC2, POLR1C/RPAC1, POLR1D/RPAC2, POLR3K/RPC10, POLR2E/RPABC1, POLR2F/RPABC2, POLR2H/RPABC3, POLR2K/RPABC4 and POLR2L/RPABC5; the stalk composed of two subunits POLR3H/RPC8 and CRCP/RPC9, forming a structural mobile part that protrudes out of the core and functions primarily in transcription initiation; and additional subunits homologous to general transcription factors of the RNA polymerase II machinery, POLR3D/RPC4-POLR3E/RPC5 heterodimer and POLR3/CRPC3-POLR3F/RPC6-POLR3G/RPC7 heterotrimer.

The protein localises to the nucleus. DNA-dependent RNA polymerase catalyzes the transcription of DNA into RNA using the four ribonucleoside triphosphates as substrates. Specific peripheric component of RNA polymerase III (Pol III) which synthesizes small non-coding RNAs including 5S rRNA, snRNAs, tRNAs and miRNAs from at least 500 distinct genomic loci. Assembles with POLR3D/RPC4 forming a subcomplex that binds the Pol III core. Enables recruitment of Pol III at transcription initiation site and drives transcription initiation from both type 2 and type 3 DNA promoters. Required for efficient transcription termination and reinitiation. Plays a key role in sensing and limiting infection by intracellular bacteria and DNA viruses. Acts as a nuclear and cytosolic DNA sensor involved in innate immune response. Can sense non-self dsDNA that serves as template for transcription into dsRNA. The non-self RNA polymerase III transcripts, such as Epstein-Barr virus-encoded RNAs (EBERs) induce type I interferon and NF-kappa-B through the RIG-I pathway. The sequence is that of DNA-directed RNA polymerase III subunit RPC5 from Homo sapiens (Human).